We begin with the raw amino-acid sequence, 198 residues long: Cytochrome c oxidase assembly protein CtaG (198 aa).

Residues 1–12 lie on the Cytoplasmic side of the membrane; it reads MADTGQSDRKER. Residues 13–35 traverse the membrane as a helical; Signal-anchor for type II membrane protein segment; the sequence is SNGVIVGTCLAFVVGMVGMAYAA. At 36-198 the chain is on the periplasmic side; the sequence is VPLYDMFCRV…QVKSRTENKL (163 aa).

The protein belongs to the COX11/CtaG family.

The protein resides in the cell inner membrane. Functionally, exerts its effect at some terminal stage of cytochrome c oxidase synthesis, probably by being involved in the insertion of the copper B into subunit I. This chain is Cytochrome c oxidase assembly protein CtaG, found in Sinorhizobium medicae (strain WSM419) (Ensifer medicae).